The primary structure comprises 322 residues: NADH-quinone oxidoreductase subunit H (322 aa).

8 helical membrane-spanning segments follow: residues 15–35, 82–102, 114–134, 149–169, 186–206, 243–263, 265–285, and 302–322; these read ILHITLIIIFIIFFAATLSIL, IFILSPIIAFVSLLLVIPTIP, IGILFFLMMASLSVYAVLFAG, ASAQTLSYEVFLGLSLMGVIA, VWNVIPQFFGFLCFFIAGIAL, ISIITVSALISTVFFGGYFGF, GSSFFWLFLKTVFFILIFILI, and WKICLPLTLLNLIITAFFILI.

It belongs to the complex I subunit 1 family. As to quaternary structure, NDH-1 is composed of 13 different subunits. Subunits NuoA, H, J, K, L, M, N constitute the membrane sector of the complex.

Its subcellular location is the cell membrane. It catalyses the reaction a quinone + NADH + 5 H(+)(in) = a quinol + NAD(+) + 4 H(+)(out). In terms of biological role, NDH-1 shuttles electrons from NADH, via FMN and iron-sulfur (Fe-S) centers, to quinones in the respiratory chain. The immediate electron acceptor for the enzyme in this species is believed to be ubiquinone. Couples the redox reaction to proton translocation (for every two electrons transferred, four hydrogen ions are translocated across the cytoplasmic membrane), and thus conserves the redox energy in a proton gradient. This subunit may bind ubiquinone. The polypeptide is NADH-quinone oxidoreductase subunit H (Buchnera aphidicola subsp. Schizaphis graminum (strain Sg)).